The chain runs to 918 residues: Bromodomain testis-specific protein (918 aa).

The tract at residues 1-26 (MSDVKPPQHFTMNGNPPPPEFKNPKK) is disordered. The 107-residue stretch at 29–135 (RLTNHLQYIE…KLFLEKVAEM (107 aa)) folds into the Bromo 1 domain. A Nuclear localization signal motif is present at residues 204–215 (NGVKRKADTTTP). Disordered stretches follow at residues 241–267 (RGSG…GRRT), 379–430 (EPKN…RAHR), 575–712 (KNKP…SLVS), 738–764 (IPPL…SSSQ), and 862–899 (DTPK…AMSG). The region spanning 267-376 (TKLSERLKYC…DVFEFRFSKI (110 aa)) is the Bromo 2 domain. Positions 399-416 (SPSSSESSDSESSSPENS) are enriched in low complexity. The stretch at 426–452 (ERAHRLASLEEQQLKAVREQLQLLTQT) forms a coiled coil. The NET domain maps to 496-578 (DSEEEMNTLP…GCLRKKKNKP (83 aa)). Residues 575-584 (KNKPPKKSKI) show a composition bias toward basic residues. Positions 605–617 (KIETDGEIKDTTH) are enriched in basic and acidic residues. 2 stretches are compositionally biased toward low complexity: residues 622–648 (SDSS…DSDS) and 739–764 (PPLL…SSSQ). The stretch at 815 to 902 (EKELTTASRG…RREAMSGVID (88 aa)) forms a coiled coil. Basic and acidic residues predominate over residues 877–896 (VDREREMARKREQERRRREA).

The protein belongs to the BET family.

The protein localises to the nucleus. Testis-specific chromatin protein that specifically binds histone H4 acetylated at 'Lys-5' and 'Lys-8' (H4K5ac and H4K8ac, respectively) and plays a key role in spermatogenesis. Required in late pachytene spermatocytes: plays a role in meiotic and post-meiotic cells by binding to acetylated histones at the promoter of specific meiotic and post-meiotic genes, facilitating their activation at the appropriate time. In the post-meiotic phase of spermatogenesis, binds to hyperacetylated histones and participates in their general removal from DNA. Also recognizes and binds a subset of butyrylated histones: able to bind histone H4 butyrylated at 'Lys-8' (H4K8ac), while it is not able to bind H4 butyrylated at 'Lys-5' (H4K5ac). The polypeptide is Bromodomain testis-specific protein (brdt) (Danio rerio (Zebrafish)).